The following is a 461-amino-acid chain: Cysteine--tRNA ligase (461 aa).

C28 contributes to the Zn(2+) binding site. The 'HIGH' region motif lies at 30–40 (ITVYDLCHIGH). C209, H234, and E238 together coordinate Zn(2+). Positions 266-270 (KMSKS) match the 'KMSKS' region motif. K269 is a binding site for ATP.

The protein belongs to the class-I aminoacyl-tRNA synthetase family. Monomer. Zn(2+) serves as cofactor.

Its subcellular location is the cytoplasm. It carries out the reaction tRNA(Cys) + L-cysteine + ATP = L-cysteinyl-tRNA(Cys) + AMP + diphosphate. The polypeptide is Cysteine--tRNA ligase (Shigella flexneri).